The chain runs to 277 residues: Large ribosomal subunit protein uL2 (277 aa).

Positions 215–277 (GIRPTVRGSV…KLIVKRRNDK (63 aa)) are disordered. Over residues 264-277 (KYSDKLIVKRRNDK) the composition is skewed to basic and acidic residues.

It belongs to the universal ribosomal protein uL2 family. Part of the 50S ribosomal subunit. Forms a bridge to the 30S subunit in the 70S ribosome.

In terms of biological role, one of the primary rRNA binding proteins. Required for association of the 30S and 50S subunits to form the 70S ribosome, for tRNA binding and peptide bond formation. It has been suggested to have peptidyltransferase activity; this is somewhat controversial. Makes several contacts with the 16S rRNA in the 70S ribosome. This Clostridium acetobutylicum (strain ATCC 824 / DSM 792 / JCM 1419 / IAM 19013 / LMG 5710 / NBRC 13948 / NRRL B-527 / VKM B-1787 / 2291 / W) protein is Large ribosomal subunit protein uL2.